The sequence spans 130 residues: Small ribosomal subunit protein uS11 (130 aa).

Belongs to the universal ribosomal protein uS11 family. As to quaternary structure, part of the 30S ribosomal subunit. Interacts with proteins S7 and S18. Binds to IF-3.

Its function is as follows. Located on the platform of the 30S subunit, it bridges several disparate RNA helices of the 16S rRNA. Forms part of the Shine-Dalgarno cleft in the 70S ribosome. This Prochlorococcus marinus (strain MIT 9515) protein is Small ribosomal subunit protein uS11.